The sequence spans 112 residues: Notch-regulated ankyrin repeat-containing protein A (112 aa).

2 ANK repeats span residues 48-77 and 81-110; these read EGQT…DIRL and EGWS…YSSG.

It belongs to the NRARP family.

Its function is as follows. Regulates independently canonical Wnt and Notch signaling by modulating LEF1 and Notch protein turnover. Stabilizes LEF1, a pivotal transcription factor in the Wnt signaling cascade, by blocking its ubiquitination. Involved in angiogenesis; involved in intersegmental vessel patterning during development. This chain is Notch-regulated ankyrin repeat-containing protein A (nrarpa), found in Danio rerio (Zebrafish).